Consider the following 761-residue polypeptide: Zinc finger protein 711 (761 aa).

5 C2H2-type zinc fingers span residues 383-408 (YPCHICGKKFKSRGFLKRHMKNHPDH), 414-436 (YQCTDCEFTTNKKVSFHNHLESH), 476-499 (HKCKYCEYETAEQGLLNRHLLAVH), 505-527 (HVCVECAKGFRHPSELKKHMRTH), and 533-556 (FHCQHCEFSCADQSNLKTHIKSKH). The segment at 562 to 584 (FKCGHCPQAFADDKELQRHAEIF) adopts a C2H2-type 6; atypical zinc-finger fold. Zn(2+) contacts are provided by cysteine 564, cysteine 567, and histidine 580. 6 C2H2-type zinc fingers span residues 590–613 (HQCPHCEHKSTNSSDLKRHIISVH), 619–641 (HKCDVCEKGFHRPSELKKHSETH), 647–670 (HQCRHCDFKTLDPFTLSRHILSVH), 676–698 (FKCKRCKRGFRHQNELKKHMKTH), 704–727 (YQCQYCEYNTTDASGFKRHVISIH), and 733–755 (HRCDYCKKGFRRPSEKNQHIMRH).

This sequence belongs to the krueppel C2H2-type zinc-finger protein family. Present in ovary and brain but not in other tissues (at protein level).

Its subcellular location is the nucleus. The protein localises to the cytoplasm. Its function is as follows. Transcription regulator required for brain development. Probably acts as a transcription factor that binds to the promoter of target genes, leading to activate their expression. The protein is Zinc finger protein 711 (znf711) of Danio rerio (Zebrafish).